A 395-amino-acid chain; its full sequence is MKTVLILNFPAEGHVNPTLGITKAFSDKGYDVHYISTEKYKKRLEAAGATVHLHRDLLRTTPIHVGSPNGILDFVKIHIKTSLDILQIVKDLSKSIQFDFVYYDKFGAGELVRDYLDIPGVSSSASFLFGEEHLKILPLHPESGAPLELDQECEDLLAKMKETYGVAPKNLVQFMNNKGELNVVYTSRYFQPESDRFGDECLFIGPSFPKRAEKTDFPIEQLKDEKVIYISMGTVLDHTEDFFNLCIDAFSGFNGKVVIAAGEKADLTKLKQAPENFIIAPYVPQLEVLEQSDVFITHGGMNSVNEGIHFSVPLVVMPHDKDQPMVAQRLSELHAGYVISKDEVNAQILKQAVDEVLRNDQYTAGIKKINQSFKECMDMEEVMERIDELIRQKNK.

This sequence belongs to the UDP-glycosyltransferase family.

This is an uncharacterized protein from Bacillus subtilis (strain 168).